A 912-amino-acid chain; its full sequence is DNA (cytosine-5)-methyltransferase 3A (912 aa).

2 disordered regions span residues 1 to 178 (MPAM…GWES) and 221 to 286 (IAGM…EYED). Residues 17–40 (AEREEDRKDGEEQEEPRGKEERQE) are compositionally biased toward basic and acidic residues. Residues 47-57 (KVGRPGRKRKH) show a composition bias toward basic residues. Residues 74–83 (KSPSMAQDSG) show a composition bias toward polar residues. Phosphoserine is present on S105. Residues 113–128 (GAPAEGEGAAETLPEA) show a composition bias toward low complexity. T124 carries the phosphothreonine modification. Residues 149 to 167 (AGKEQKETNIESMKMEGSR) are compositionally biased toward basic and acidic residues. Residue K162 forms a Glycyl lysine isopeptide (Lys-Gly) (interchain with G-Cter in SUMO2) linkage. R171 carries the omega-N-methylarginine modification. An interaction with DNMT1 and DNMT3B region spans residues 199–403 (SKRKRDEWLA…DTAKAVEVQN (205 aa)). Residues S243 and S255 each carry the phosphoserine modification. The span at 246-260 (AVQQPTDPASPTVAT) shows a compositional bias: polar residues. A Phosphothreonine modification is found at T261. S267 bears the Phosphoserine mark. The segment covering 269 to 279 (AGDKNATKAGD) has biased composition (basic and acidic residues). Residues 292 to 350 (IGELVWGKLRGFSWWPGRIVSWWMTGRSRAAEGTRWVMWFGDGKFSVVCVEKLMPLSSF) form the PWWP domain. Phosphoserine is present on residues S390 and S393. The tract at residues 447 to 466 (AYAPPPPAKKPRKSTAEKPK) is disordered. The ADD domain maps to 482-614 (EVRQKCRNIE…LQMFFANNHD (133 aa)). The GATA-type; atypical zinc-finger motif lies at 493-523 (ICISCGSLNVTLEHPLFVGGMCQNCKNCFLE). Positions 494–586 (CISCGSLNVT…KEDPWNCYMC (93 aa)) are interaction with the PRC2/EED-EZH2 complex. The segment at 534–590 (QSYCTICCGGREVLMCGNNNCCRCFCVECVDLLVGPGAAQAAIKEDPWNCYMCGHKG) adopts a PHD-type; atypical zinc-finger fold. One can recognise an SAM-dependent MTase C5-type domain in the interval 634 to 912 (IRVLSLFDGI…APLKEYFACV (279 aa)). S-adenosyl-L-methionine contacts are provided by residues 641 to 645 (DGIAT), E664, and 686 to 688 (DVR). The active site involves C710. C710 bears the S-methylcysteine; by autocatalysis mark. Residue 891-893 (RSW) coordinates S-adenosyl-L-methionine.

This sequence belongs to the class I-like SAM-binding methyltransferase superfamily. C5-methyltransferase family. As to quaternary structure, heterotetramer composed of 1 DNMT3A homodimer and 2 DNMT3L subunits (DNMT3L-DNMT3A-DNMT3A-DNMT3L). Interacts with UBC9, PIAS1 and PIAS2. Binds the ZBTB18 transcriptional repressor. Interacts with SETDB1. Associates with HDAC1 through its ADD domain. Interacts with UHRF1. Interacts with DNMT1 and DNMT3B. Interacts with the PRC2/EED-EZH2 complex. Interacts with MPHOSPH8. Interacts with histone H3 that is not methylated at 'Lys-4' (H3K4). Interacts with SPOCD1. Interacts with ZNF263; recruited to the SIX3 promoter along with other proteins involved in chromatin modification and transcriptional corepression where it contributes to transcriptional repression. In terms of processing, sumoylated; sumoylation disrupts the ability to interact with histone deacetylases (HDAC1 and HDAC2) and repress transcription. Post-translationally, auto-methylated at Cys-710: auto-methylation takes place in absence of DNA substrate and inactivates the DNA methyltransferase activity. Inactivation by auto-methylation may be used to inactivate unused DNA methyltransferases in the cell. As to expression, highly expressed in fetal tissues, skeletal muscle, heart, peripheral blood mononuclear cells, kidney, and at lower levels in placenta, brain, liver, colon, spleen, small intestine and lung.

The protein localises to the nucleus. It localises to the chromosome. The protein resides in the cytoplasm. It catalyses the reaction a 2'-deoxycytidine in DNA + S-adenosyl-L-methionine = a 5-methyl-2'-deoxycytidine in DNA + S-adenosyl-L-homocysteine + H(+). The enzyme catalyses L-cysteinyl-[protein] + S-adenosyl-L-methionine = S-methyl-L-cysteinyl-[protein] + S-adenosyl-L-homocysteine + H(+). Its activity is regulated as follows. Activated by binding to the regulatory factor DNMT3L. Auto-methylation at Cys-710 in absence of DNA inactivates the DNA methyltransferase activity. Its function is as follows. Required for genome-wide de novo methylation and is essential for the establishment of DNA methylation patterns during development. DNA methylation is coordinated with methylation of histones. It modifies DNA in a non-processive manner and also methylates non-CpG sites. May preferentially methylate DNA linker between 2 nucleosomal cores and is inhibited by histone H1. Plays a role in paternal and maternal imprinting. Required for methylation of most imprinted loci in germ cells. Acts as a transcriptional corepressor for ZBTB18. Recruited to trimethylated 'Lys-36' of histone H3 (H3K36me3) sites. Can actively repress transcription through the recruitment of HDAC activity. Also has weak auto-methylation activity on Cys-710 in absence of DNA. In Homo sapiens (Human), this protein is DNA (cytosine-5)-methyltransferase 3A (DNMT3A).